Consider the following 324-residue polypeptide: Beta-ketoacyl-[acyl-carrier-protein] synthase III (324 aa).

Active-site residues include cysteine 112 and histidine 249. The segment at 250–254 is ACP-binding; that stretch reads QANRR. Asparagine 279 is an active-site residue.

Belongs to the thiolase-like superfamily. FabH family. As to quaternary structure, homodimer.

It is found in the cytoplasm. It catalyses the reaction malonyl-[ACP] + acetyl-CoA + H(+) = 3-oxobutanoyl-[ACP] + CO2 + CoA. The protein operates within lipid metabolism; fatty acid biosynthesis. Its function is as follows. Catalyzes the condensation reaction of fatty acid synthesis by the addition to an acyl acceptor of two carbons from malonyl-ACP. Catalyzes the first condensation reaction which initiates fatty acid synthesis and may therefore play a role in governing the total rate of fatty acid production. Possesses both acetoacetyl-ACP synthase and acetyl transacylase activities. Its substrate specificity determines the biosynthesis of branched-chain and/or straight-chain of fatty acids. This Streptococcus pyogenes serotype M49 (strain NZ131) protein is Beta-ketoacyl-[acyl-carrier-protein] synthase III.